We begin with the raw amino-acid sequence, 214 residues long: ATP-dependent Clp protease proteolytic subunit (214 aa).

The active-site Nucleophile is the Ser-113. His-138 is an active-site residue.

Belongs to the peptidase S14 family. In terms of assembly, fourteen ClpP subunits assemble into 2 heptameric rings which stack back to back to give a disk-like structure with a central cavity, resembling the structure of eukaryotic proteasomes.

It is found in the cytoplasm. The catalysed reaction is Hydrolysis of proteins to small peptides in the presence of ATP and magnesium. alpha-casein is the usual test substrate. In the absence of ATP, only oligopeptides shorter than five residues are hydrolyzed (such as succinyl-Leu-Tyr-|-NHMec, and Leu-Tyr-Leu-|-Tyr-Trp, in which cleavage of the -Tyr-|-Leu- and -Tyr-|-Trp bonds also occurs).. Functionally, cleaves peptides in various proteins in a process that requires ATP hydrolysis. Has a chymotrypsin-like activity. Plays a major role in the degradation of misfolded proteins. In Alkalilimnicola ehrlichii (strain ATCC BAA-1101 / DSM 17681 / MLHE-1), this protein is ATP-dependent Clp protease proteolytic subunit.